The chain runs to 2222 residues: DNA polymerase epsilon catalytic subunit A (2222 aa).

Residues 90 to 110 form a disordered region; sequence ETLSSGSNGGGNSNDGERVTT. Zn(2+) contacts are provided by Cys2108, Cys2111, Cys2130, and Cys2133. The segment at 2108–2133 adopts a CysA-type zinc-finger fold; the sequence is CEYCFFISDIDFCKAAPESIFSCVRC. [4Fe-4S] cluster is bound by residues Cys2164, Cys2167, Cys2179, and Cys2181. Positions 2164–2181 match the CysB motif motif; it reads CSRCHKVKRDYMSAHCPC.

Belongs to the DNA polymerase type-B family. DNA polymerase epsilon is a heterotetramer consisting of POL2, DPB2, DPB3 and DPB4. The cofactor is [4Fe-4S] cluster.

Its subcellular location is the nucleus. The enzyme catalyses DNA(n) + a 2'-deoxyribonucleoside 5'-triphosphate = DNA(n+1) + diphosphate. Functionally, catalytic component of the DNA polymerase epsilon complex which participates in chromosomal DNA replication. Required during synthesis of the leading DNA strands at the replication fork, binds at/or near replication origins and moves along DNA with the replication fork. Has 3'-5' proofreading exonuclease activity that corrects errors arising during DNA replication. This Saccharomyces cerevisiae (strain ATCC 204508 / S288c) (Baker's yeast) protein is DNA polymerase epsilon catalytic subunit A (POL2).